We begin with the raw amino-acid sequence, 427 residues long: Gamma-glutamyl phosphate reductase (427 aa).

Belongs to the gamma-glutamyl phosphate reductase family.

The protein localises to the cytoplasm. It carries out the reaction L-glutamate 5-semialdehyde + phosphate + NADP(+) = L-glutamyl 5-phosphate + NADPH + H(+). Its pathway is amino-acid biosynthesis; L-proline biosynthesis; L-glutamate 5-semialdehyde from L-glutamate: step 2/2. Catalyzes the NADPH-dependent reduction of L-glutamate 5-phosphate into L-glutamate 5-semialdehyde and phosphate. The product spontaneously undergoes cyclization to form 1-pyrroline-5-carboxylate. In Rhizobium meliloti (strain 1021) (Ensifer meliloti), this protein is Gamma-glutamyl phosphate reductase.